We begin with the raw amino-acid sequence, 356 residues long: Protein-glutamate methylesterase/protein-glutamine glutaminase 3 (356 aa).

The 118-residue stretch at 3-120 folds into the Response regulatory domain; sequence KVAIVDDSAV…KGFLEESQAR (118 aa). A 4-aspartylphosphate modification is found at D54. Residues 165 to 356 form the CheB-type methylesterase domain; the sequence is NQTTDRVVAL…AEEIIAFTKQ (192 aa). Catalysis depends on residues S177, H203, and D299.

It belongs to the CheB family. In terms of processing, phosphorylated by CheA. Phosphorylation of the N-terminal regulatory domain activates the methylesterase activity.

It localises to the cytoplasm. It catalyses the reaction [protein]-L-glutamate 5-O-methyl ester + H2O = L-glutamyl-[protein] + methanol + H(+). The catalysed reaction is L-glutaminyl-[protein] + H2O = L-glutamyl-[protein] + NH4(+). Functionally, involved in chemotaxis. Part of a chemotaxis signal transduction system that modulates chemotaxis in response to various stimuli. Catalyzes the demethylation of specific methylglutamate residues introduced into the chemoreceptors (methyl-accepting chemotaxis proteins or MCP) by CheR. Also mediates the irreversible deamidation of specific glutamine residues to glutamic acid. The sequence is that of Protein-glutamate methylesterase/protein-glutamine glutaminase 3 from Shewanella oneidensis (strain ATCC 700550 / JCM 31522 / CIP 106686 / LMG 19005 / NCIMB 14063 / MR-1).